The primary structure comprises 240 residues: Triosephosphate isomerase (240 aa).

9 to 11 (NWK) contacts substrate. His94 serves as the catalytic Electrophile. Glu163 (proton acceptor) is an active-site residue. Substrate-binding positions include Gly169, Ser202, and 223-224 (GG).

This sequence belongs to the triosephosphate isomerase family. In terms of assembly, homodimer.

Its subcellular location is the cytoplasm. The enzyme catalyses D-glyceraldehyde 3-phosphate = dihydroxyacetone phosphate. It participates in carbohydrate biosynthesis; gluconeogenesis. The protein operates within carbohydrate degradation; glycolysis; D-glyceraldehyde 3-phosphate from glycerone phosphate: step 1/1. Involved in the gluconeogenesis. Catalyzes stereospecifically the conversion of dihydroxyacetone phosphate (DHAP) to D-glyceraldehyde-3-phosphate (G3P). This chain is Triosephosphate isomerase, found in Gloeobacter violaceus (strain ATCC 29082 / PCC 7421).